Reading from the N-terminus, the 250-residue chain is Putative ABC transporter ATP-binding protein YjkB (250 aa).

One can recognise an ABC transporter domain in the interval 13–245 (ISFRSVRKSY…PQHEAAKEFL (233 aa)). ATP is bound at residue 49-56 (GPSGSGKS).

It belongs to the ABC transporter superfamily.

In Bacillus subtilis (strain 168), this protein is Putative ABC transporter ATP-binding protein YjkB (yjkB).